The primary structure comprises 202 residues: Peptide methionine sulfoxide reductase A3 (202 aa).

Positions 1–34 (MNILNRLGLGSSGQTNMDPSPIAQGNDDDTPAPG) are disordered. Position 189 is a phosphoserine (Ser-189).

This sequence belongs to the MsrA Met sulfoxide reductase family. In terms of tissue distribution, expressed in rosette and cauline leaves, and at lower levels in roots, stems and flowers (at protein level).

It localises to the cytoplasm. It is found in the cytosol. The enzyme catalyses L-methionyl-[protein] + [thioredoxin]-disulfide + H2O = L-methionyl-(S)-S-oxide-[protein] + [thioredoxin]-dithiol. It carries out the reaction [thioredoxin]-disulfide + L-methionine + H2O = L-methionine (S)-S-oxide + [thioredoxin]-dithiol. Its function is as follows. Catalyzes the reduction of methionine sulfoxide (MetSO) to methionine in proteins. Plays a protective role against oxidative stress by restoring activity to proteins that have been inactivated by methionine oxidation. May prevent cellular oxidative damage due to light exposure. MSRA family specifically reduces the MetSO S-enantiomer. The chain is Peptide methionine sulfoxide reductase A3 (MSRA3) from Arabidopsis thaliana (Mouse-ear cress).